The chain runs to 81 residues: Insulin-like growth factor 1 (81 aa).

Positions 1 to 4 (FASA) are excised as a propeptide. The b stretch occupies residues 5–33 (GPETLCGAELVDALQFVCGDRGFYFNKPT). Intrachain disulfides connect Cys10-Cys52, Cys22-Cys65, and Cys51-Cys56. The c stretch occupies residues 34-45 (GYGSSSRRAPQT). The a stretch occupies residues 46-66 (GIVDECCFRSCDLRRLEMYCA). The tract at residues 67-74 (PLKPAKAA) is d. A propeptide spans 75-81 (RSVRAQR) (e peptide).

This sequence belongs to the insulin family. Forms a ternary complex with IGFR1 and ITGAV:ITGB3. Forms a ternary complex with IGFR1 and ITGA6:ITGB4.

The protein localises to the secreted. Functionally, the insulin-like growth factors, isolated from plasma, are structurally and functionally related to insulin but have a much higher growth-promoting activity. May be a physiological regulator of [1-14C]-2-deoxy-D-glucose (2DG) transport and glycogen synthesis in osteoblasts. Stimulates glucose transport in bone-derived osteoblastic (PyMS) cells and is effective at much lower concentrations than insulin, not only regarding glycogen and DNA synthesis but also with regard to enhancing glucose uptake. May play a role in synapse maturation. Ca(2+)-dependent exocytosis of IGF1 is required for sensory perception of smell in the olfactory bulb. Acts as a ligand for IGF1R. Binds to the alpha subunit of IGF1R, leading to the activation of the intrinsic tyrosine kinase activity which autophosphorylates tyrosine residues in the beta subunit thus initiating a cascade of down-stream signaling events leading to activation of the PI3K-AKT/PKB and the Ras-MAPK pathways. Binds to integrins ITGAV:ITGB3 and ITGA6:ITGB4. Its binding to integrins and subsequent ternary complex formation with integrins and IGFR1 are essential for IGF1 signaling. Induces the phosphorylation and activation of IGFR1, MAPK3/ERK1, MAPK1/ERK2 and AKT1. As part of the MAPK/ERK signaling pathway, acts as a negative regulator of apoptosis in cardiomyocytes via promotion of STUB1/CHIP-mediated ubiquitination and degradation of ICER-type isoforms of CREM. This Suncus murinus (Asian house shrew) protein is Insulin-like growth factor 1.